The following is a 375-amino-acid chain: uncharacterized protein (375 aa).

The first 20 residues, 1-20, serve as a signal peptide directing secretion; it reads MKNKLFIILIIFIILKIVIC. At 21–335 the chain is on the extracellular side; it reads QNTTPSKLIP…EKQVERKITP (315 aa). Low complexity predominate over residues 30–42; the sequence is PQQQQKQKQQQTQ. Disordered stretches follow at residues 30 to 74 and 113 to 253; these read PQQQ…QPQQ and SQNV…PHNH. Basic residues predominate over residues 43–53; that stretch reads PHHHHHHHQQH. Positions 54-74 are enriched in low complexity; sequence QQHQQQHQPNQQIKQQQQPQQ. The segment covering 120-151 has biased composition (basic residues); sequence PPHHTQQRVPHHHGPNGAPHHHGPNGAPHHHG. The segment covering 168 to 180 has biased composition (polar residues); that stretch reads GHNTQGHVQTNHV. Residues 181–220 are compositionally biased toward low complexity; it reads NNINKNNINNNNNNNNNNNNNNNNNNNNNINDNKNIRNNI. The chain crosses the membrane as a helical span at residues 336 to 356; that stretch reads IMVLYILLASTMVIQLFIMVF. Topologically, residues 357–375 are cytoplasmic; the sequence is KQVKHIREINAKTTMESLL.

The protein localises to the membrane. This is an uncharacterized protein from Dictyostelium discoideum (Social amoeba).